The primary structure comprises 421 residues: Isocitrate dehydrogenase [NADP], mitochondrial (421 aa).

The N-terminal 8 residues, 1-8, are a transit peptide targeting the mitochondrion; the sequence is ARAAARHY. N6-acetyllysine is present on residues Lys-14, Lys-17, Lys-36, and Lys-38. N6-acetyllysine; alternate occurs at positions 49 and 75. 2 positions are modified to N6-succinyllysine; alternate: Lys-49 and Lys-75. Residues 84–86 and Arg-91 each bind NADP(+); that span reads TIT. Thr-86 provides a ligand contact to D-threo-isocitrate. Residues 103-109 and Arg-118 each bind D-threo-isocitrate; that span reads SPNGTIR. Lys-124 carries the post-translational modification N6-acetyllysine. At Lys-135 the chain carries N6-acetyllysine; alternate. Lys-135 is subject to N6-succinyllysine; alternate. Arg-141 is a D-threo-isocitrate binding site. 2 positions are modified to N6-acetyllysine; alternate: Lys-149 and Lys-162. Residues Lys-149 and Lys-162 each carry the N6-succinyllysine; alternate modification. Lys-168 is subject to N6-acetyllysine. Lys-225 bears the N6-acetyllysine; alternate mark. Lys-225 is subject to N6-succinyllysine; alternate. An N6-acetyllysine mark is found at Lys-232, Lys-241, Lys-244, and Lys-249. Lys-251 is modified (N6-acetyllysine; alternate). N6-succinyllysine; alternate is present on Lys-251. Asp-260 lines the Mn(2+) pocket. Residue Lys-268 coordinates NADP(+). Asp-283 is a binding site for Mn(2+). NADP(+) contacts are provided by residues 318–323 and Asn-336; that span reads GTVTRH. Position 353 is an N6-acetyllysine; alternate (Lys-353). Residue Lys-353 is modified to N6-succinyllysine; alternate. Lys-369, Lys-382, and Lys-411 each carry N6-acetyllysine.

Belongs to the isocitrate and isopropylmalate dehydrogenases family. In terms of assembly, homodimer. Requires Mg(2+) as cofactor. Mn(2+) serves as cofactor. Acetylation at Lys-382 dramatically reduces catalytic activity. Deacetylated by SIRT3.

It is found in the mitochondrion. The enzyme catalyses D-threo-isocitrate + NADP(+) = 2-oxoglutarate + CO2 + NADPH. Plays a role in intermediary metabolism and energy production. It may tightly associate or interact with the pyruvate dehydrogenase complex. This chain is Isocitrate dehydrogenase [NADP], mitochondrial (IDH2), found in Sus scrofa (Pig).